The chain runs to 196 residues: Peptidyl-tRNA hydrolase (196 aa).

His15 provides a ligand contact to tRNA. His20 acts as the Proton acceptor in catalysis. Positions 66, 68, and 114 each coordinate tRNA.

It belongs to the PTH family. Monomer.

It is found in the cytoplasm. The catalysed reaction is an N-acyl-L-alpha-aminoacyl-tRNA + H2O = an N-acyl-L-amino acid + a tRNA + H(+). In terms of biological role, hydrolyzes ribosome-free peptidyl-tRNAs (with 1 or more amino acids incorporated), which drop off the ribosome during protein synthesis, or as a result of ribosome stalling. Functionally, catalyzes the release of premature peptidyl moieties from peptidyl-tRNA molecules trapped in stalled 50S ribosomal subunits, and thus maintains levels of free tRNAs and 50S ribosomes. The sequence is that of Peptidyl-tRNA hydrolase from Polynucleobacter necessarius subsp. necessarius (strain STIR1).